Consider the following 265-residue polypeptide: UPF0354 protein BH3252 (265 aa).

It belongs to the UPF0354 family.

This is UPF0354 protein BH3252 from Halalkalibacterium halodurans (strain ATCC BAA-125 / DSM 18197 / FERM 7344 / JCM 9153 / C-125) (Bacillus halodurans).